We begin with the raw amino-acid sequence, 143 residues long: Cofilin (143 aa).

The 133-residue stretch at 5-137 (GVAVADESLT…AYESVLEKVS (133 aa)) folds into the ADF-H domain.

This sequence belongs to the actin-binding proteins ADF family.

Its subcellular location is the cytoplasm. The protein localises to the cytoskeleton. It is found in the nucleus matrix. Functionally, controls reversibly actin polymerization and depolymerization in a pH-sensitive manner. It has the ability to bind G- and F-actin in a 1:1 ratio of cofilin to actin. Binding to F-actin is regulated by tropomyosin. It is the major component of intranuclear and cytoplasmic actin rods. Required for accumulation of actin at the cell division site via depolymerizing actin at the cell ends. In association with myosin II has a role in the assembly of the contractile ring via severing actin filaments. Involved in the maintenance of the contractile ring once formed. In association with profilin and capping protein, has a role in the mitotic reorganization of the actin cytoskeleton. The sequence is that of Cofilin (COF1) from Eremothecium gossypii (strain ATCC 10895 / CBS 109.51 / FGSC 9923 / NRRL Y-1056) (Yeast).